We begin with the raw amino-acid sequence, 161 residues long: Small ribosomal subunit protein uS9 (161 aa).

A compositionally biased stretch (polar residues) spans 1–21 (MATLQSLADLNRANTQTSNPE). Residues 1–25 (MATLQSLADLNRANTQTSNPENEAP) form a disordered region.

Belongs to the universal ribosomal protein uS9 family.

In Methylorubrum extorquens (strain CM4 / NCIMB 13688) (Methylobacterium extorquens), this protein is Small ribosomal subunit protein uS9.